The chain runs to 280 residues: 2-dehydro-3-deoxyphosphooctonate aldolase (280 aa).

It belongs to the KdsA family.

It is found in the cytoplasm. The enzyme catalyses D-arabinose 5-phosphate + phosphoenolpyruvate + H2O = 3-deoxy-alpha-D-manno-2-octulosonate-8-phosphate + phosphate. It participates in carbohydrate biosynthesis; 3-deoxy-D-manno-octulosonate biosynthesis; 3-deoxy-D-manno-octulosonate from D-ribulose 5-phosphate: step 2/3. Its pathway is bacterial outer membrane biogenesis; lipopolysaccharide biosynthesis. The sequence is that of 2-dehydro-3-deoxyphosphooctonate aldolase from Neisseria meningitidis serogroup B (strain ATCC BAA-335 / MC58).